The sequence spans 249 residues: uncharacterized protein (249 aa).

It belongs to the HAD-like hydrolase superfamily. CbbY/CbbZ/Gph/YieH family.

This is an uncharacterized protein from Schizosaccharomyces pombe (strain 972 / ATCC 24843) (Fission yeast).